The sequence spans 122 residues: UPF0102 protein VV1_0590 (122 aa).

This sequence belongs to the UPF0102 family.

The protein is UPF0102 protein VV1_0590 of Vibrio vulnificus (strain CMCP6).